Reading from the N-terminus, the 364-residue chain is MAQQTPLYEQHTLCGARMVDFHGWMMPLHYGSQIDEHHAVRTDAGMFDVSHMTIVDLRGSRTREFLRYLLANDVAKLTKSGKALYSGMLNASGGVIDDLIVYYFSEDFFRLVVNSATREKDLSWITQHAEPFGIEITVRDDLSMIAVQGPNAQAKAATLFNDAQRQAVEGMKPFFGVQAGDLFIATTGYTGEAGYEIALPNEKAADFWRALVEAGVKPCGLGARDTLRLEAGMNLYGQEMDETISPLAANMGWTIAWEPADRDFIGREALEAQREHGTEKLVGLVMTEKGVLRNELPVRFTDAQGNQHEGIITSGTFSPTLGYSIALARVPEGIGETAIVQIRNREMPVKVTKPVFVRNGKAVA.

The protein belongs to the GcvT family. In terms of assembly, the glycine cleavage system is composed of four proteins: P, T, L and H.

The enzyme catalyses N(6)-[(R)-S(8)-aminomethyldihydrolipoyl]-L-lysyl-[protein] + (6S)-5,6,7,8-tetrahydrofolate = N(6)-[(R)-dihydrolipoyl]-L-lysyl-[protein] + (6R)-5,10-methylene-5,6,7,8-tetrahydrofolate + NH4(+). Functionally, the glycine cleavage system catalyzes the degradation of glycine. The polypeptide is Aminomethyltransferase (Escherichia coli O17:K52:H18 (strain UMN026 / ExPEC)).